The following is an 815-amino-acid chain: Putative transcription factor phnE (815 aa).

Positions 522 to 577 are disordered; it reads PSRRNSDGSAHSSPSSTPSSSSTSSPLPSPASERPPPLDVVTRPSTGTSTPSSPTL. A compositionally biased stretch (low complexity) spans 523–547; that stretch reads SRRNSDGSAHSSPSSTPSSSSTSSP. The span at 548 to 559 shows a compositional bias: pro residues; it reads LPSPASERPPPL. Residues 563-577 show a composition bias toward low complexity; the sequence is TRPSTGTSTPSSPTL.

Its subcellular location is the nucleus. Putative transcription factor that may be involved in the regulation of the expression of the gene cluster that mediates the biosynthesis of phenalenones such as herqueinone, compounds that have been reported to treat tumors, bacterial infections and/or mycoses, and rheumatic diseases. In Penicillium herquei, this protein is Putative transcription factor phnE.